A 339-amino-acid polypeptide reads, in one-letter code: Heme A synthase (339 aa).

The next 8 helical transmembrane spans lie at 7-27 (VIIW…VGGI), 92-112 (HRFI…YFLI), 126-146 (ILLG…KSGL), 159-179 (LHLT…LDLI), 199-219 (AIII…AGLI), 254-274 (VQFV…FLTF), 291-311 (ALLI…LYSV), and 312-332 (PLWL…TTTY). Residue H258 participates in heme binding. Position 319 (H319) interacts with heme.

The protein belongs to the COX15/CtaA family. Type 2 subfamily. As to quaternary structure, interacts with CtaB. Heme b serves as cofactor.

The protein resides in the cell membrane. It carries out the reaction Fe(II)-heme o + 2 A + H2O = Fe(II)-heme a + 2 AH2. The protein operates within porphyrin-containing compound metabolism; heme A biosynthesis; heme A from heme O: step 1/1. Catalyzes the conversion of heme O to heme A by two successive hydroxylations of the methyl group at C8. The first hydroxylation forms heme I, the second hydroxylation results in an unstable dihydroxymethyl group, which spontaneously dehydrates, resulting in the formyl group of heme A. This chain is Heme A synthase, found in Flavobacterium psychrophilum (strain ATCC 49511 / DSM 21280 / CIP 103535 / JIP02/86).